The primary structure comprises 547 residues: ATP synthase subunit alpha (547 aa).

172 to 179 is an ATP binding site; sequence GDRKTGKT.

Belongs to the ATPase alpha/beta chains family. F-type ATPases have 2 components, CF(1) - the catalytic core - and CF(0) - the membrane proton channel. CF(1) has five subunits: alpha(3), beta(3), gamma(1), delta(1), epsilon(1). CF(0) has three main subunits: a(1), b(2) and c(9-12). The alpha and beta chains form an alternating ring which encloses part of the gamma chain. CF(1) is attached to CF(0) by a central stalk formed by the gamma and epsilon chains, while a peripheral stalk is formed by the delta and b chains.

It localises to the cell membrane. It catalyses the reaction ATP + H2O + 4 H(+)(in) = ADP + phosphate + 5 H(+)(out). Produces ATP from ADP in the presence of a proton gradient across the membrane. The alpha chain is a regulatory subunit. In Rhodococcus jostii (strain RHA1), this protein is ATP synthase subunit alpha.